Consider the following 879-residue polypeptide: Phosphoenolpyruvate carboxylase (879 aa).

Residues His-138 and Lys-545 contribute to the active site.

The protein belongs to the PEPCase type 1 family. Requires Mg(2+) as cofactor.

It carries out the reaction oxaloacetate + phosphate = phosphoenolpyruvate + hydrogencarbonate. Functionally, forms oxaloacetate, a four-carbon dicarboxylic acid source for the tricarboxylic acid cycle. The chain is Phosphoenolpyruvate carboxylase from Actinobacillus pleuropneumoniae serotype 5b (strain L20).